The sequence spans 390 residues: uncharacterized protein (390 aa).

The protein belongs to the arsA ATPase family.

This is an uncharacterized protein from Streptomyces coelicolor (strain ATCC BAA-471 / A3(2) / M145).